The primary structure comprises 418 residues: PP2A regulatory subunit TAP46 (418 aa).

Residues 367–418 (KMIQESNSAWHKDGSRSAQEDEDAEEEKARAWDDWKDDNPRGAGNKKLTPCG) are disordered. 2 stretches are compositionally biased toward basic and acidic residues: residues 376–385 (WHKDGSRSAQ) and 393–406 (EKARAWDDWKDDNP).

This sequence belongs to the IGBP1/TAP42 family.

Its function is as follows. Involved in the regulation of the TOR signaling pathway. Seems to act as a regulator of PP2A catalytic activity. This Oryza sativa subsp. japonica (Rice) protein is PP2A regulatory subunit TAP46.